The primary structure comprises 331 residues: Flagellar P-ring protein (331 aa).

The first 25 residues, 1 to 25 (MKKRLAVLLVIVLTITFSFSVTTRI), serve as a signal peptide directing secretion.

The protein belongs to the FlgI family. The basal body constitutes a major portion of the flagellar organelle and consists of four rings (L,P,S, and M) mounted on a central rod.

The protein resides in the periplasm. Its subcellular location is the bacterial flagellum basal body. Its function is as follows. Assembles around the rod to form the L-ring and probably protects the motor/basal body from shearing forces during rotation. The sequence is that of Flagellar P-ring protein from Thermotoga petrophila (strain ATCC BAA-488 / DSM 13995 / JCM 10881 / RKU-1).